Here is a 363-residue protein sequence, read N- to C-terminus: MRTVGVEEELLLVDPATGEPRALSAAVLARAFLDDSEQDVFEKELHEQMLEFATHPQADMERLHAEIVRCREEAGRHAGGIGCAVAALATSPLPVTPSIGVNRRYEWMAEQYGVVVHEQLVLGCHVHVSVDSDEEGVAVIDRVRPWLPVLAALSANSPFWQGRDSSYSSYRSRVWQRWPSAGPTELFGSAERYHRRVADMLATGTVLDDGMVYFDVRLSQRYPTVEFRVADVCLDASTAVVLAALARALVDTAAREWRAGAEPAEHSVSLLRLAAWRAARSGLTSELLHPATMRRMPAESVVRDLLEHAGEALAAAGDLERVREGVEKLLRHGNGARVQRELLARTGSLREVVAACVRRTQAA.

It belongs to the glutamate--cysteine ligase type 2 family. YbdK subfamily.

It carries out the reaction L-cysteine + L-glutamate + ATP = gamma-L-glutamyl-L-cysteine + ADP + phosphate + H(+). ATP-dependent carboxylate-amine ligase which exhibits weak glutamate--cysteine ligase activity. The sequence is that of Putative glutamate--cysteine ligase 2 from Streptomyces coelicolor (strain ATCC BAA-471 / A3(2) / M145).